Here is a 785-residue protein sequence, read N- to C-terminus: Penicillin-binding protein 1A (785 aa).

The Cytoplasmic portion of the chain corresponds to 1–6; it reads MYKSLF. A helical; Signal-anchor for type II membrane protein membrane pass occupies residues 7–27; it reads FFLKIFAILILLGCSVTAYII. At 28 to 785 the chain is on the periplasmic side; the sequence is YHYSHDLPDY…GISDQSQEIY (758 aa). Residues 49–220 are transglycosylase; the sequence is TRIYSRDGKL…SELNPDKNYS (172 aa). Glutamate 87 functions as the Proton donor; for transglycosylase activity in the catalytic mechanism. The transpeptidase stretch occupies residues 398-711; sequence DVIVVEPIKD…SNVVLPIFID (314 aa). Catalysis depends on serine 457, which acts as the Acyl-ester intermediate; for transpeptidase activity.

It in the N-terminal section; belongs to the glycosyltransferase 51 family. The protein in the C-terminal section; belongs to the transpeptidase family.

The protein resides in the cell inner membrane. The catalysed reaction is [GlcNAc-(1-&gt;4)-Mur2Ac(oyl-L-Ala-gamma-D-Glu-L-Lys-D-Ala-D-Ala)](n)-di-trans,octa-cis-undecaprenyl diphosphate + beta-D-GlcNAc-(1-&gt;4)-Mur2Ac(oyl-L-Ala-gamma-D-Glu-L-Lys-D-Ala-D-Ala)-di-trans,octa-cis-undecaprenyl diphosphate = [GlcNAc-(1-&gt;4)-Mur2Ac(oyl-L-Ala-gamma-D-Glu-L-Lys-D-Ala-D-Ala)](n+1)-di-trans,octa-cis-undecaprenyl diphosphate + di-trans,octa-cis-undecaprenyl diphosphate + H(+). It catalyses the reaction Preferential cleavage: (Ac)2-L-Lys-D-Ala-|-D-Ala. Also transpeptidation of peptidyl-alanyl moieties that are N-acyl substituents of D-alanine.. It participates in cell wall biogenesis; peptidoglycan biosynthesis. Its function is as follows. Cell wall formation. Synthesis of cross-linked peptidoglycan from the lipid intermediates. The enzyme has a penicillin-insensitive transglycosylase N-terminal domain (formation of linear glycan strands) and a penicillin-sensitive transpeptidase C-terminal domain (cross-linking of the peptide subunits). This chain is Penicillin-binding protein 1A (mrcA), found in Rickettsia typhi (strain ATCC VR-144 / Wilmington).